Here is a 309-residue protein sequence, read N- to C-terminus: Ribosomal RNA small subunit methyltransferase H (309 aa).

S-adenosyl-L-methionine-binding positions include 33–35 (GGH), D53, F79, D100, and Q107.

The protein belongs to the methyltransferase superfamily. RsmH family.

Its subcellular location is the cytoplasm. It carries out the reaction cytidine(1402) in 16S rRNA + S-adenosyl-L-methionine = N(4)-methylcytidine(1402) in 16S rRNA + S-adenosyl-L-homocysteine + H(+). Specifically methylates the N4 position of cytidine in position 1402 (C1402) of 16S rRNA. In Clostridium botulinum (strain Loch Maree / Type A3), this protein is Ribosomal RNA small subunit methyltransferase H.